The primary structure comprises 79 residues: MSDIEARVKKIIAEQLGVEESQVTNEKAFVADLGADSLDTVELVMALEDEFGIEIPDEDAEKITTVQNAVDYATKNQKA.

The Carrier domain maps to Ser-2–Gln-77. O-(pantetheine 4'-phosphoryl)serine is present on Ser-37.

This sequence belongs to the acyl carrier protein (ACP) family. In terms of processing, 4'-phosphopantetheine is transferred from CoA to a specific serine of apo-ACP by AcpS. This modification is essential for activity because fatty acids are bound in thioester linkage to the sulfhydryl of the prosthetic group.

It localises to the cytoplasm. It functions in the pathway lipid metabolism; fatty acid biosynthesis. Functionally, carrier of the growing fatty acid chain in fatty acid biosynthesis. The sequence is that of Acyl carrier protein from Variovorax paradoxus (strain S110).